The sequence spans 346 residues: Phosphoribosylformylglycinamidine cyclo-ligase (346 aa).

This sequence belongs to the AIR synthase family.

Its subcellular location is the cytoplasm. The catalysed reaction is 2-formamido-N(1)-(5-O-phospho-beta-D-ribosyl)acetamidine + ATP = 5-amino-1-(5-phospho-beta-D-ribosyl)imidazole + ADP + phosphate + H(+). It functions in the pathway purine metabolism; IMP biosynthesis via de novo pathway; 5-amino-1-(5-phospho-D-ribosyl)imidazole from N(2)-formyl-N(1)-(5-phospho-D-ribosyl)glycinamide: step 2/2. The chain is Phosphoribosylformylglycinamidine cyclo-ligase from Prochlorococcus marinus (strain NATL1A).